Here is a 606-residue protein sequence, read N- to C-terminus: Maternal effect protein oskar (606 aa).

An HTH OST-type domain is found at 152–221 (EYPDIDSEVR…SGKRIFNLKA (70 aa)). Phosphoserine is present on residues S270 and S275. The segment at 425–439 (LMGDDFMLYLARMEL) is leucine-zipper.

Interacts with smaug (smg). In terms of assembly, interacts with yl/yolkless. Begins to accumulate at the posterior pole of the oocyte from stage 8 onwards.

It is found in the endosome. In terms of biological role, organizes the germ plasm and directs localization of the posterior determinant nanos. Oskar protein is required to keep nanos (nos) RNA and staufen protein at the posterior pole. The protein is Maternal effect protein oskar (osk) of Drosophila melanogaster (Fruit fly).